Reading from the N-terminus, the 282-residue chain is uncharacterized protein (282 aa).

It belongs to the ycf80 family.

The protein localises to the plastid. It is found in the chloroplast. This is an uncharacterized protein from Guillardia theta (Cryptophyte).